The primary structure comprises 841 residues: Translation initiation factor IF-2 (841 aa).

The tract at residues 94 to 255 (QRSPEEIEAE…RNAHGFQSPT (162 aa)) is disordered. Residues 96–135 (SPEEIEAERKREMDERRAVENAARQKAEEEAKRRAEEDAR) are compositionally biased toward basic and acidic residues. Over residues 136–175 (NQPAAGQPASAPAQPVAAAEPVREAPAAAAPAPASAAPSA) the composition is skewed to low complexity. Basic and acidic residues-rich tracts occupy residues 176–217 (DARK…EKAP) and 225–234 (TTDEESDSFR). The segment covering 235–248 (RGGRGKGKLKKRNA) has biased composition (basic residues). A tr-type G domain is found at 341 to 510 (SRAPVVTVMG…LLQAEVLELK (170 aa)). The interval 350–357 (GHVDHGKT) is G1. Residue 350–357 (GHVDHGKT) coordinates GTP. A G2 region spans residues 375–379 (GITQH). The G3 stretch occupies residues 396–399 (DTPG). GTP contacts are provided by residues 396 to 400 (DTPGH) and 450 to 453 (NKID). Residues 450 to 453 (NKID) are G4. Positions 486-488 (SAK) are G5.

Belongs to the TRAFAC class translation factor GTPase superfamily. Classic translation factor GTPase family. IF-2 subfamily.

The protein resides in the cytoplasm. In terms of biological role, one of the essential components for the initiation of protein synthesis. Protects formylmethionyl-tRNA from spontaneous hydrolysis and promotes its binding to the 30S ribosomal subunits. Also involved in the hydrolysis of GTP during the formation of the 70S ribosomal complex. The polypeptide is Translation initiation factor IF-2 (Pseudomonas syringae pv. tomato (strain ATCC BAA-871 / DC3000)).